The chain runs to 140 residues: Small ribosomal subunit protein uS12 (140 aa).

Disordered regions lie at residues 1–20 and 35–55; these read MPTI…VKSD and QTNV…TMTP. Aspartate 102 is subject to 3-methylthioaspartic acid. The interval 121 to 140 is disordered; it reads DGRMQGRSKYGTKRPKAAKK. Residues 130–140 are compositionally biased toward basic residues; sequence YGTKRPKAAKK.

It belongs to the universal ribosomal protein uS12 family. As to quaternary structure, part of the 30S ribosomal subunit. Contacts proteins S8 and S17. May interact with IF1 in the 30S initiation complex.

Its function is as follows. With S4 and S5 plays an important role in translational accuracy. Interacts with and stabilizes bases of the 16S rRNA that are involved in tRNA selection in the A site and with the mRNA backbone. Located at the interface of the 30S and 50S subunits, it traverses the body of the 30S subunit contacting proteins on the other side and probably holding the rRNA structure together. The combined cluster of proteins S8, S12 and S17 appears to hold together the shoulder and platform of the 30S subunit. The sequence is that of Small ribosomal subunit protein uS12 from Exiguobacterium sp. (strain ATCC BAA-1283 / AT1b).